A 178-amino-acid chain; its full sequence is Interleukin-10 (178 aa).

A signal peptide spans 1–18 (MHSSALLCCLVLLTGVRA). Intrachain disulfides connect Cys30–Cys126 and Cys80–Cys132. Asn134 carries N-linked (GlcNAc...) asparagine glycosylation.

This sequence belongs to the IL-10 family. Homodimer. Interacts with IL10RA and IL10RB.

The protein localises to the secreted. Major immune regulatory cytokine that acts on many cells of the immune system where it has profound anti-inflammatory functions, limiting excessive tissue disruption caused by inflammation. Mechanistically, IL10 binds to its heterotetrameric receptor comprising IL10RA and IL10RB leading to JAK1 and STAT2-mediated phosphorylation of STAT3. In turn, STAT3 translocates to the nucleus where it drives expression of anti-inflammatory mediators. Targets antigen-presenting cells (APCs) such as macrophages and monocytes and inhibits their release of pro-inflammatory cytokines including granulocyte-macrophage colony-stimulating factor /GM-CSF, granulocyte colony-stimulating factor/G-CSF, IL-1 alpha, IL-1 beta, IL-6, IL-8 and TNF-alpha. Also interferes with antigen presentation by reducing the expression of MHC-class II and co-stimulatory molecules, thereby inhibiting their ability to induce T cell activation. In addition, controls the inflammatory response of macrophages by reprogramming essential metabolic pathways including mTOR signaling. This chain is Interleukin-10 (IL10), found in Macaca mulatta (Rhesus macaque).